The sequence spans 356 residues: Phospho-2-dehydro-3-deoxyheptonate aldolase, Tyr-sensitive (356 aa).

This sequence belongs to the class-I DAHP synthase family. It depends on a divalent metal cation as a cofactor.

It carries out the reaction D-erythrose 4-phosphate + phosphoenolpyruvate + H2O = 7-phospho-2-dehydro-3-deoxy-D-arabino-heptonate + phosphate. It participates in metabolic intermediate biosynthesis; chorismate biosynthesis; chorismate from D-erythrose 4-phosphate and phosphoenolpyruvate: step 1/7. Specifically feedback inhibited by tyrosine with 50% inhibition observed at 9 microM tyrosine, pH 7.0. Its function is as follows. Stereospecific condensation of phosphoenolpyruvate (PEP) and D-erythrose-4-phosphate (E4P) giving rise to 3-deoxy-D-arabino-heptulosonate-7-phosphate (DAHP). The chain is Phospho-2-dehydro-3-deoxyheptonate aldolase, Tyr-sensitive (aroF) from Escherichia coli (strain K12).